The following is a 590-amino-acid chain: Acetylcholinesterase (590 aa).

Residues 1–24 form the signal peptide; that stretch reads MREMNLLVTSSLGVLLHLVVLCQA. Asn-83 carries an N-linked (GlcNAc...) asparagine glycan. Cys-91 and Cys-118 are disulfide-bonded. Residue Ser-224 is the Acyl-ester intermediate of the active site. Residues Cys-278 and Cys-289 are joined by a disulfide bond. Glu-351 functions as the Charge relay system in the catalytic mechanism. A disulfide bond links Cys-426 and Cys-545. A glycan (N-linked (GlcNAc...) asparagine) is linked at Asn-440. Catalysis depends on His-464, which acts as the Charge relay system. Residues Asn-481 and Asn-557 are each glycosylated (N-linked (GlcNAc...) asparagine). Ser-567 is lipidated: GPI-anchor amidated serine. A propeptide spans 568 to 590 (removed in mature form); the sequence is SGTSSSKGIIFYVLFSILYLIFY.

The protein belongs to the type-B carboxylesterase/lipase family. As to quaternary structure, isoform H form is a homodimer; the asymmetric form is a disulfide-bonded oligomer composed of a collagenic subunit (Q) and a variable number of T catalytic subunits. Post-translationally, an interchain disulfide bond is present in what becomes position 596 of the T isoform. Found in the synapses and to a lower extent in extrajunctional areas of muscle and nerve, and on erythrocyte membranes.

The protein resides in the cell membrane. The protein localises to the synapse. It catalyses the reaction acetylcholine + H2O = choline + acetate + H(+). Functionally, terminates signal transduction at the neuromuscular junction by rapid hydrolysis of the acetylcholine released into the synaptic cleft. May be involved in cell-cell interactions. This is Acetylcholinesterase (ache) from Torpedo marmorata (Marbled electric ray).